We begin with the raw amino-acid sequence, 703 residues long: uncharacterized protein (703 aa).

An N-terminal signal peptide occupies residues 1–23 (MKQIMIFLTSFMLLAMTGQTALA). A helical membrane pass occupies residues 673–693 (MYIGVLALIMVVAAVFIWIAV).

It is found in the cell membrane. This is an uncharacterized protein from Bacillus subtilis (strain 168).